A 22-amino-acid chain; its full sequence is Mu-conotoxin GIIIC (22 aa).

3 disulfide bridges follow: Cys3-Cys15, Cys4-Cys20, and Cys10-Cys21. Pro6, Pro7, and Pro17 each carry 4-hydroxyproline. Residue Ala22 is modified to Alanine amide.

This sequence belongs to the conotoxin M superfamily. Expressed by the venom duct.

Its subcellular location is the secreted. Its function is as follows. Mu-conotoxins block voltage-gated sodium channels (Nav). This toxin shows potent activity on Nav1.4/SCN4A (IC(50)=286 nM), and weak activity on mNav1.6/SCN8A. The polypeptide is Mu-conotoxin GIIIC (Conus geographus (Geography cone)).